The sequence spans 79 residues: Cytoinsectotoxin-3 (79 aa).

It belongs to the cationic peptide 06 (cytoinsectotoxin) family. In terms of tissue distribution, expressed by the venom gland.

It is found in the secreted. Insecticidal and antimicrobial peptide. Has insecticidal activity against larvae of flesh fly S.carnaria. Has antibacterial activity against Gram-positive bacterium B.subtilis B-501 (MIC=0.63 uM) and Gram-negative bacterium E.coli DH5alpha (MIC=2.5 uM). In Lachesana tarabaevi (Spider), this protein is Cytoinsectotoxin-3.